A 278-amino-acid polypeptide reads, in one-letter code: 3-methyl-2-oxobutanoate hydroxymethyltransferase (278 aa).

Residues aspartate 43 and aspartate 82 each contribute to the Mg(2+) site. 3-methyl-2-oxobutanoate is bound by residues 43-44 (DS), aspartate 82, and lysine 112. Glutamate 114 contributes to the Mg(2+) binding site. The active-site Proton acceptor is glutamate 181.

This sequence belongs to the PanB family. In terms of assembly, homodecamer; pentamer of dimers. It depends on Mg(2+) as a cofactor.

It is found in the cytoplasm. It carries out the reaction 3-methyl-2-oxobutanoate + (6R)-5,10-methylene-5,6,7,8-tetrahydrofolate + H2O = 2-dehydropantoate + (6S)-5,6,7,8-tetrahydrofolate. It participates in cofactor biosynthesis; (R)-pantothenate biosynthesis; (R)-pantoate from 3-methyl-2-oxobutanoate: step 1/2. Its function is as follows. Catalyzes the reversible reaction in which hydroxymethyl group from 5,10-methylenetetrahydrofolate is transferred onto alpha-ketoisovalerate to form ketopantoate. This chain is 3-methyl-2-oxobutanoate hydroxymethyltransferase, found in Bacillus cereus (strain ATCC 14579 / DSM 31 / CCUG 7414 / JCM 2152 / NBRC 15305 / NCIMB 9373 / NCTC 2599 / NRRL B-3711).